A 348-amino-acid polypeptide reads, in one-letter code: Putative [LysW]-L-2-aminoadipate/[LysW]-L-glutamate phosphate reductase (348 aa).

9-12 (SGYV) is a binding site for NADP(+). Cys149 is an active-site residue. An NADP(+)-binding site is contributed by Asn315.

The protein belongs to the NAGSA dehydrogenase family. Type 1 subfamily. LysY sub-subfamily.

Its subcellular location is the cytoplasm. The enzyme catalyses [amino-group carrier protein]-C-terminal-N-(1-carboxy-5-oxopentan-1-yl)-L-glutamine + phosphate + NADP(+) = [amino-group carrier protein]-C-terminal-N-(1-carboxy-5-phosphooxy-5-oxopentan-1-yl)-L-glutamine + NADPH + H(+). The catalysed reaction is [amino-group carrier protein]-C-terminal-gamma-(L-glutamyl-5-semialdehyde)-L-glutamate + phosphate + NADP(+) = [amino-group carrier protein]-C-terminal-gamma-(5-phospho-L-glutamyl)-L-glutamate + NADPH + H(+). It functions in the pathway amino-acid biosynthesis; L-lysine biosynthesis via AAA pathway; L-lysine from L-alpha-aminoadipate (Thermus route): step 3/5. Its pathway is amino-acid biosynthesis; L-arginine biosynthesis. Functionally, involved in both the arginine and lysine biosynthetic pathways. This Nitrosopumilus maritimus (strain SCM1) protein is Putative [LysW]-L-2-aminoadipate/[LysW]-L-glutamate phosphate reductase.